Reading from the N-terminus, the 173-residue chain is MAAEGEKKMITLKSSDGEEFEVEEAVAMESQTIRHMIEDDCADNGIPLPNVNSKILSKVIEYCNKHVHAAAAAASKAADDAASAAAAVPPPSGEDLKNWDADFVKVDQATLFDLILAANYLNIKGLLDLTCQTVADMIKGKTPEEIRKTFNIKNDFTPEEEEEIRRENQWAFE.

The segment at 115–173 (ILAANYLNIKGLLDLTCQTVADMIKGKTPEEIRKTFNIKNDFTPEEEEEIRRENQWAFE) is interaction with the F-box domain of F-box proteins.

It belongs to the SKP1 family. In terms of assembly, part of a SCF (SKP1-CUL1-F-box protein) E3 ubiquitin-protein ligase complex. Interacts directly with MOF (via F-box domain). Interacts with rice black streaked dwarf virus RBSDV protein P7-2. Is able to form the SCF complex together with CUL1 and the viral P7-2 protein. Interacts with D3.

Its subcellular location is the nucleus. The protein operates within protein modification; protein ubiquitination. Its function is as follows. Involved in ubiquitination and subsequent proteasomal degradation of target proteins. Together with CUL1, a RING-box and a F-box protein, it forms a SCF E3 ubiquitin ligase complex. The functional specificity of this complex depends on the type of F-box protein. In the SCF complex, it serves as an adapter that links the F-box protein to CUL1. This Oryza sativa subsp. japonica (Rice) protein is SKP1-like protein 1.